The following is a 119-amino-acid chain: Ribonuclease P protein component (119 aa).

The protein belongs to the RnpA family. Consists of a catalytic RNA component (M1 or rnpB) and a protein subunit.

The catalysed reaction is Endonucleolytic cleavage of RNA, removing 5'-extranucleotides from tRNA precursor.. In terms of biological role, RNaseP catalyzes the removal of the 5'-leader sequence from pre-tRNA to produce the mature 5'-terminus. It can also cleave other RNA substrates such as 4.5S RNA. The protein component plays an auxiliary but essential role in vivo by binding to the 5'-leader sequence and broadening the substrate specificity of the ribozyme. The chain is Ribonuclease P protein component from Streptococcus gordonii (strain Challis / ATCC 35105 / BCRC 15272 / CH1 / DL1 / V288).